We begin with the raw amino-acid sequence, 151 residues long: MADESNTGPVAAAVAADAEVKVPTAKKLRSPRPQKAAAEPAQPKAPAAKPRRYSEQERNDKLKLIETQVSEGNTLKNAIQSAGISEQTYYHWKGAAKPVGKKDAKSTKPLPAGDEFADLVKLEEENQKLRKRLAEKLRTENAELRKRLGLD.

The disordered stretch occupies residues M1–K61. Low complexity predominate over residues P33–A48. The segment covering R52–K61 has biased composition (basic and acidic residues).

It belongs to the SyrB family.

In terms of biological role, responsible for the repression of SyrM activity. This is Transcriptional regulator SyrB (syrB) from Rhizobium meliloti (strain 1021) (Ensifer meliloti).